The primary structure comprises 670 residues: DNA ligase (670 aa).

NAD(+) contacts are provided by residues aspartate 36–aspartate 40, serine 84–leucine 85, and glutamate 116. Lysine 118 serves as the catalytic N6-AMP-lysine intermediate. Residues arginine 139, glutamate 177, lysine 293, and lysine 317 each contribute to the NAD(+) site. 4 residues coordinate Zn(2+): cysteine 411, cysteine 414, cysteine 429, and cysteine 434. The 77-residue stretch at lysine 594–glutamate 670 folds into the BRCT domain.

This sequence belongs to the NAD-dependent DNA ligase family. LigA subfamily. Requires Mg(2+) as cofactor. It depends on Mn(2+) as a cofactor.

It carries out the reaction NAD(+) + (deoxyribonucleotide)n-3'-hydroxyl + 5'-phospho-(deoxyribonucleotide)m = (deoxyribonucleotide)n+m + AMP + beta-nicotinamide D-nucleotide.. Its function is as follows. DNA ligase that catalyzes the formation of phosphodiester linkages between 5'-phosphoryl and 3'-hydroxyl groups in double-stranded DNA using NAD as a coenzyme and as the energy source for the reaction. It is essential for DNA replication and repair of damaged DNA. This Thermodesulfovibrio yellowstonii (strain ATCC 51303 / DSM 11347 / YP87) protein is DNA ligase.